The chain runs to 250 residues: 5'-nucleotidase SurE (250 aa).

A divalent metal cation-binding residues include D8, D9, S39, and N91.

The protein belongs to the SurE nucleotidase family. It depends on a divalent metal cation as a cofactor.

The protein resides in the cytoplasm. It catalyses the reaction a ribonucleoside 5'-phosphate + H2O = a ribonucleoside + phosphate. In terms of biological role, nucleotidase that shows phosphatase activity on nucleoside 5'-monophosphates. In Shewanella halifaxensis (strain HAW-EB4), this protein is 5'-nucleotidase SurE.